Reading from the N-terminus, the 320-residue chain is Phosphatidylserine decarboxylase proenzyme (320 aa).

Catalysis depends on charge relay system; for autoendoproteolytic cleavage activity residues Asp90, His147, and Ser254. Ser254 (schiff-base intermediate with substrate; via pyruvic acid; for decarboxylase activity) is an active-site residue. Ser254 carries the post-translational modification Pyruvic acid (Ser); by autocatalysis. A disordered region spans residues 290–320; that stretch reads TAAAEPAPLPEEEIRAEHRASPLVDDKQDQG. The span at 301–320 shows a compositional bias: basic and acidic residues; sequence EEIRAEHRASPLVDDKQDQG.

The protein belongs to the phosphatidylserine decarboxylase family. PSD-B subfamily. Prokaryotic type I sub-subfamily. As to quaternary structure, heterodimer of a large membrane-associated beta subunit and a small pyruvoyl-containing alpha subunit. The cofactor is pyruvate. Post-translationally, is synthesized initially as an inactive proenzyme. Formation of the active enzyme involves a self-maturation process in which the active site pyruvoyl group is generated from an internal serine residue via an autocatalytic post-translational modification. Two non-identical subunits are generated from the proenzyme in this reaction, and the pyruvate is formed at the N-terminus of the alpha chain, which is derived from the carboxyl end of the proenzyme. The autoendoproteolytic cleavage occurs by a canonical serine protease mechanism, in which the side chain hydroxyl group of the serine supplies its oxygen atom to form the C-terminus of the beta chain, while the remainder of the serine residue undergoes an oxidative deamination to produce ammonia and the pyruvoyl prosthetic group on the alpha chain. During this reaction, the Ser that is part of the protease active site of the proenzyme becomes the pyruvoyl prosthetic group, which constitutes an essential element of the active site of the mature decarboxylase.

It is found in the cell membrane. The enzyme catalyses a 1,2-diacyl-sn-glycero-3-phospho-L-serine + H(+) = a 1,2-diacyl-sn-glycero-3-phosphoethanolamine + CO2. It functions in the pathway phospholipid metabolism; phosphatidylethanolamine biosynthesis; phosphatidylethanolamine from CDP-diacylglycerol: step 2/2. Its function is as follows. Catalyzes the formation of phosphatidylethanolamine (PtdEtn) from phosphatidylserine (PtdSer). In Klebsiella pneumoniae subsp. pneumoniae (strain ATCC 700721 / MGH 78578), this protein is Phosphatidylserine decarboxylase proenzyme.